The following is a 483-amino-acid chain: Glutamyl-tRNA(Gln) amidotransferase subunit A (483 aa).

Active-site charge relay system residues include lysine 76 and serine 151. Serine 175 (acyl-ester intermediate) is an active-site residue.

This sequence belongs to the amidase family. GatA subfamily. As to quaternary structure, heterotrimer of A, B and C subunits.

The catalysed reaction is L-glutamyl-tRNA(Gln) + L-glutamine + ATP + H2O = L-glutaminyl-tRNA(Gln) + L-glutamate + ADP + phosphate + H(+). In terms of biological role, allows the formation of correctly charged Gln-tRNA(Gln) through the transamidation of misacylated Glu-tRNA(Gln) in organisms which lack glutaminyl-tRNA synthetase. The reaction takes place in the presence of glutamine and ATP through an activated gamma-phospho-Glu-tRNA(Gln). This is Glutamyl-tRNA(Gln) amidotransferase subunit A from Pseudomonas fluorescens (strain SBW25).